A 355-amino-acid polypeptide reads, in one-letter code: Blue-sensitive opsin P467 (355 aa).

Residues 1-36 are Extracellular-facing; sequence MNGTEGINFYVPLSNKTGLVRSPFEYPQYYLADPWK. N-linked (GlcNAc...) asparagine glycans are attached at residues asparagine 2 and asparagine 15. A helical transmembrane segment spans residues 37-61; it reads FKVLSFYMFFLIAAGMPLNGLTLFV. Over 62-73 the chain is Cytoplasmic; sequence TFQHKKLRQPLN. A helical membrane pass occupies residues 74 to 98; the sequence is YILVNLAAANLVTVCCGFTVTFYAS. Residues 99–113 lie on the Extracellular side of the membrane; it reads WYAYFVFGPIGCAIE. The cysteines at positions 110 and 187 are disulfide-linked. The chain crosses the membrane as a helical span at residues 114–133; it reads GFFATIGGQVALWSLVVLAI. Residues 134–152 lie on the Cytoplasmic side of the membrane; sequence ERYIVICKPMGNFRFSATH. A helical transmembrane segment spans residues 153-176; sequence AIMGIAFTWFMALACAGPPLFGWS. Residues 177-202 are Extracellular-facing; that stretch reads RFIPEGMQCSCGPDYYTLNPDFHNES. An N-linked (GlcNAc...) asparagine glycan is attached at asparagine 200. Residues 203–230 traverse the membrane as a helical segment; that stretch reads YVIYMFIVHFTVPMVVIFFSYGRLVCKV. At 231 to 252 the chain is on the cytoplasmic side; the sequence is REAAAQQQESATTQKAEKEVTR. Residues 253-276 form a helical membrane-spanning segment; sequence MVILMVLGFLLAWTPYAATAIWIF. Residues 277–284 are Extracellular-facing; that stretch reads TNRGAAFS. A helical membrane pass occupies residues 285–309; that stretch reads VTFMTIPAFFSKSSSIYNPIIYVLL. Position 296 is an N6-(retinylidene)lysine (lysine 296). Topologically, residues 310-355 are cytoplasmic; the sequence is NKQFRNCMVTTICCGKNPFGDEDVSSSVSQSKTEVSSVSSSQVAPA. Residues 333-355 form a disordered region; sequence VSSSVSQSKTEVSSVSSSQVAPA. Residues 334–355 are compositionally biased toward low complexity; it reads SSSVSQSKTEVSSVSSSQVAPA.

This sequence belongs to the G-protein coupled receptor 1 family. Opsin subfamily. Post-translationally, phosphorylated on some or all of the serine and threonine residues present in the C-terminal region. In this lizard the color pigments are found in the rod-shaped photoreceptor cells which have been derived from ancestral cone-like photoreceptors.

It localises to the membrane. Its function is as follows. Visual pigments are the light-absorbing molecules that mediate vision. They consist of an apoprotein, opsin, covalently linked to cis-retinal. The polypeptide is Blue-sensitive opsin P467 (Gekko gecko (Tokay gecko)).